A 261-amino-acid chain; its full sequence is Potassium/proton antiporter CemA (261 aa).

The next 3 membrane-spanning stretches (helical) occupy residues 138-158, 184-204, and 221-241; these read IISH…YLIL, FLIL…GWEL, and IISG…KYWI.

Belongs to the CemA family.

It localises to the plastid. The protein localises to the chloroplast inner membrane. It catalyses the reaction K(+)(in) + H(+)(out) = K(+)(out) + H(+)(in). Contributes to K(+)/H(+) antiport activity by supporting proton efflux to control proton extrusion and homeostasis in chloroplasts in a light-dependent manner to modulate photosynthesis. Prevents excessive induction of non-photochemical quenching (NPQ) under continuous-light conditions. Indirectly promotes efficient inorganic carbon uptake into chloroplasts. This chain is Potassium/proton antiporter CemA, found in Pinus koraiensis (Korean pine).